Consider the following 426-residue polypeptide: Adenylosuccinate synthetase (426 aa).

Residues 12–18 (GDEGKGK) and 40–42 (GHT) each bind GTP. The Proton acceptor role is filled by Asp-13. The Mg(2+) site is built by Asp-13 and Gly-40. IMP is bound by residues 13-16 (DEGK), 38-41 (NAGH), Thr-131, Arg-145, Gln-226, Thr-241, and Arg-305. The active-site Proton donor is His-41. Substrate is bound at residue 301–307 (ATTGRKR). GTP-binding positions include Arg-307, 333 to 335 (KLD), and 415 to 417 (SVG).

Belongs to the adenylosuccinate synthetase family. As to quaternary structure, homodimer. It depends on Mg(2+) as a cofactor.

The protein resides in the cytoplasm. It carries out the reaction IMP + L-aspartate + GTP = N(6)-(1,2-dicarboxyethyl)-AMP + GDP + phosphate + 2 H(+). It functions in the pathway purine metabolism; AMP biosynthesis via de novo pathway; AMP from IMP: step 1/2. Plays an important role in the de novo pathway of purine nucleotide biosynthesis. Catalyzes the first committed step in the biosynthesis of AMP from IMP. The chain is Adenylosuccinate synthetase from Nitratidesulfovibrio vulgaris (strain DP4) (Desulfovibrio vulgaris).